Here is a 61-residue protein sequence, read N- to C-terminus: Large ribosomal subunit protein uL29 (61 aa).

Belongs to the universal ribosomal protein uL29 family.

In Campylobacter curvus (strain 525.92), this protein is Large ribosomal subunit protein uL29.